The sequence spans 108 residues: Translation initiation factor 1A (108 aa).

An S1-like domain is found at 11 to 85 (PSRDVPRPEE…NRCDILYKYG (75 aa)).

The protein belongs to the eIF-1A family.

Its function is as follows. Seems to be required for maximal rate of protein biosynthesis. Enhances ribosome dissociation into subunits and stabilizes the binding of the initiator Met-tRNA(I) to 40 S ribosomal subunits. The protein is Translation initiation factor 1A (eIF1A) of Saccharolobus solfataricus (strain ATCC 35092 / DSM 1617 / JCM 11322 / P2) (Sulfolobus solfataricus).